The following is a 126-amino-acid chain: Putative lipoprotein LprD (126 aa).

Positions 1-19 (MSTTRRRRPALVALVTIAA) are cleaved as a signal peptide. Cys-20 is lipidated: N-palmitoyl cysteine. A lipid anchor (S-diacylglycerol cysteine) is attached at Cys-20. A helical transmembrane segment spans residues 44–64 (GYALQWPLFAGFCLYTYHNFV).

The protein to M.tuberculosis Rv1343c.

The protein resides in the cell membrane. This Mycobacterium leprae (strain TN) protein is Putative lipoprotein LprD (lprD).